The sequence spans 802 residues: Copper-exporting P-type ATPase (802 aa).

HMA domains are found at residues 5–70 (KKTT…YGVA) and 72–138 (ETVE…YDAS). Cu(+) is bound by residues C16, C19, C83, and C86. 6 helical membrane passes run 161–181 (LIIS…HLFN), 192–212 (WFQF…FYVG), 224–244 (MDVL…YEMV), 256–276 (LYFE…YLEA), 411–431 (YFVP…ITLV), and 438–458 (PALV…LGLA). The active-site 4-aspartylphosphate intermediate is the D495. The Mg(2+) site is built by D690 and D694. 2 consecutive transmembrane segments (helical) span residues 748 to 767 (LFWA…LGLL) and 771 to 790 (VAGA…ALRL).

The protein belongs to the cation transport ATPase (P-type) (TC 3.A.3) family. Type IB subfamily.

It localises to the cell membrane. It catalyses the reaction Cu(+)(in) + ATP + H2O = Cu(+)(out) + ADP + phosphate + H(+). In terms of biological role, involved in copper export. This Staphylococcus aureus (strain MRSA252) protein is Copper-exporting P-type ATPase (copA).